The following is a 299-amino-acid chain: uncharacterized protein (299 aa).

This is an uncharacterized protein from Archaeoglobus fulgidus (strain ATCC 49558 / DSM 4304 / JCM 9628 / NBRC 100126 / VC-16).